A 441-amino-acid polypeptide reads, in one-letter code: Asparagine--tRNA ligase, mitochondrial (441 aa).

The protein belongs to the class-II aminoacyl-tRNA synthetase family.

It is found in the mitochondrion. It carries out the reaction tRNA(Asn) + L-asparagine + ATP = L-asparaginyl-tRNA(Asn) + AMP + diphosphate + H(+). This Schizosaccharomyces pombe (strain 972 / ATCC 24843) (Fission yeast) protein is Asparagine--tRNA ligase, mitochondrial (slm5).